A 326-amino-acid chain; its full sequence is Putative ubiquitin-conjugating enzyme E2 38 (326 aa).

Residues 54 to 214 (NWVKKVQDEW…VFLLSLKTMV (161 aa)) form the UBC core domain. Catalysis depends on Cys140, which acts as the Glycyl thioester intermediate. Residues 297–326 (LAEKPKPPVNNANTENQSKKKTRKRSRSSR) form a disordered region. A compositionally biased stretch (basic residues) spans 315-326 (KKKTRKRSRSSR).

It belongs to the ubiquitin-conjugating enzyme family.

The enzyme catalyses S-ubiquitinyl-[E1 ubiquitin-activating enzyme]-L-cysteine + [E2 ubiquitin-conjugating enzyme]-L-cysteine = [E1 ubiquitin-activating enzyme]-L-cysteine + S-ubiquitinyl-[E2 ubiquitin-conjugating enzyme]-L-cysteine.. It functions in the pathway protein modification; protein ubiquitination. In terms of biological role, accepts the ubiquitin from the E1 complex and catalyzes its covalent attachment to other proteins. This Arabidopsis thaliana (Mouse-ear cress) protein is Putative ubiquitin-conjugating enzyme E2 38 (UBC38).